The chain runs to 203 residues: MKSRNGPLRVGIGGPVGSGKTALTEKLCKAMRDDYSVAVVTNDIYTTEDAEALVRMQALTSDRIVGVETGGCPHTAIREDATINLQAIAGLNERLPDLDVVFIESGGDNLAATFSPDLADITIYVISVCQGEEIPRKGGPGITKSDLLVINKKDLAPFVDVDLDVMDRDATRMRQARPFVFSDMKRGDGVGTIVDFLKEQGGL.

A GTP-binding site is contributed by 14 to 21 (GPVGSGKT).

This sequence belongs to the SIMIBI class G3E GTPase family. UreG subfamily. Homodimer. UreD, UreF and UreG form a complex that acts as a GTP-hydrolysis-dependent molecular chaperone, activating the urease apoprotein by helping to assemble the nickel containing metallocenter of UreC. The UreE protein probably delivers the nickel.

The protein resides in the cytoplasm. Its function is as follows. Facilitates the functional incorporation of the urease nickel metallocenter. This process requires GTP hydrolysis, probably effectuated by UreG. The chain is Urease accessory protein UreG from Rhizobium rhizogenes (strain K84 / ATCC BAA-868) (Agrobacterium radiobacter).